Here is an 874-residue protein sequence, read N- to C-terminus: Protein translocase subunit SecA (874 aa).

Residues Q85, 103–107 (GEGKT), and D492 contribute to the ATP site. A compositionally biased stretch (basic and acidic residues) spans 839 to 854 (EEGPKKPYRREQKIGR). The tract at residues 839-864 (EEGPKKPYRREQKIGRNDPCPCGSGK) is disordered. Positions 858, 860, 869, and 870 each coordinate Zn(2+).

Belongs to the SecA family. In terms of assembly, monomer and homodimer. Part of the essential Sec protein translocation apparatus which comprises SecA, SecYEG and auxiliary proteins SecDF. Other proteins may also be involved. Zn(2+) is required as a cofactor.

Its subcellular location is the cell membrane. It localises to the cytoplasm. It carries out the reaction ATP + H2O + cellular proteinSide 1 = ADP + phosphate + cellular proteinSide 2.. Part of the Sec protein translocase complex. Interacts with the SecYEG preprotein conducting channel. Has a central role in coupling the hydrolysis of ATP to the transfer of proteins into and across the cell membrane, serving as an ATP-driven molecular motor driving the stepwise translocation of polypeptide chains across the membrane. This Carboxydothermus hydrogenoformans (strain ATCC BAA-161 / DSM 6008 / Z-2901) protein is Protein translocase subunit SecA.